Reading from the N-terminus, the 141-residue chain is Cystatin (141 aa).

Residues 1 to 26 form the signal peptide; that stretch reads MVHSQLPVAAPLRLLCALLLLPSATM. In terms of domain architecture, Cystatin spans 29–129; the sequence is GGLSPRSVTD…CHFQVWSRPW (101 aa). The Secondary area of contact signature appears at 73–77; it reads QVVAG. 2 disulfide bridges follow: C91–C107 and C120–C140.

It belongs to the cystatin family. Expressed at a low level by the venom gland (at protein level).

The protein localises to the secreted. Its function is as follows. Inhibits various C1 cysteine proteases including cathepsin L, papain and cathepsin B. This protein has no toxic activity and its function in the venom is unknown. It may play a role as a housekeeping or regulatory protein. The protein is Cystatin of Pseudonaja textilis (Eastern brown snake).